The sequence spans 379 residues: Transcription factor TIP2 (379 aa).

Residues 144–184 form a disordered region; the sequence is MVGPFESSPTPRSGGGRKRSRATAGFHGGGPANGVEKKEKQ. The basic motif; degenerate stretch occupies residues 173 to 186; sequence GPANGVEKKEKQRR. A bHLH domain is found at 173-222; the sequence is GPANGVEKKEKQRRLRLTEKYNALMLLIPNRTKEDRATVISDAIEYIQEL. The tract at residues 187–222 is helix-loop-helix motif; that stretch reads LRLTEKYNALMLLIPNRTKEDRATVISDAIEYIQEL.

Belongs to the bHLH protein family. Homodimer. Interacts with TDR, but not with EAT1. As to expression, highly expressed in anthers; strong expression in the middle layer and tapetum, and weak expression in the endothecium.

Its subcellular location is the nucleus. In terms of biological role, transcription factor that binds to the E-box-containing promoter regions of the transcription factors TDR and EAT1, activating their expression. May have a role in specifying the cell pattern of the inner anther walls and functioning in meiosis progression. Required for male reproduction. Acts downstream of UDT1 and GAMYB, but upstream of TDR1 and EAT1 in pollen development. The chain is Transcription factor TIP2 (TIP2) from Oryza sativa subsp. japonica (Rice).